A 278-amino-acid polypeptide reads, in one-letter code: Pantothenate synthetase (278 aa).

M26 to H33 contacts ATP. The active-site Proton donor is H33. Q57 lines the (R)-pantoate pocket. Beta-alanine is bound at residue Q57. G144–D147 serves as a coordination point for ATP. Position 150 (Q150) interacts with (R)-pantoate. ATP is bound by residues G173 and L181–R184.

It belongs to the pantothenate synthetase family. In terms of assembly, homodimer.

It is found in the cytoplasm. It carries out the reaction (R)-pantoate + beta-alanine + ATP = (R)-pantothenate + AMP + diphosphate + H(+). Its pathway is cofactor biosynthesis; (R)-pantothenate biosynthesis; (R)-pantothenate from (R)-pantoate and beta-alanine: step 1/1. Functionally, catalyzes the condensation of pantoate with beta-alanine in an ATP-dependent reaction via a pantoyl-adenylate intermediate. The chain is Pantothenate synthetase from Neisseria meningitidis serogroup B (strain ATCC BAA-335 / MC58).